Here is a 356-residue protein sequence, read N- to C-terminus: S-adenosylmethionine:tRNA ribosyltransferase-isomerase (356 aa).

Belongs to the QueA family. As to quaternary structure, monomer.

Its subcellular location is the cytoplasm. The catalysed reaction is 7-aminomethyl-7-carbaguanosine(34) in tRNA + S-adenosyl-L-methionine = epoxyqueuosine(34) in tRNA + adenine + L-methionine + 2 H(+). The protein operates within tRNA modification; tRNA-queuosine biosynthesis. Transfers and isomerizes the ribose moiety from AdoMet to the 7-aminomethyl group of 7-deazaguanine (preQ1-tRNA) to give epoxyqueuosine (oQ-tRNA). The chain is S-adenosylmethionine:tRNA ribosyltransferase-isomerase from Enterobacter sp. (strain 638).